We begin with the raw amino-acid sequence, 267 residues long: Alpha carbonic anhydrase 4 (267 aa).

An N-terminal signal peptide occupies residues 1–26; sequence MDTNAKTIFFMAMCFIYLSFPNISHA. N22 carries an N-linked (GlcNAc...) asparagine glycan. Positions 34 to 264 constitute an Alpha-carbonic anhydrase domain; the sequence is TPFTYEQKTE…SKGRSVWFYD (231 aa). The cysteines at positions 59 and 214 are disulfide-linked. The active-site Proton acceptor is the H99. Residues H125 and H127 each contribute to the Zn(2+) site. An N-linked (GlcNAc...) asparagine glycan is attached at N135. H144 is a binding site for Zn(2+). Residue 210 to 211 coordinates substrate; that stretch reads TV.

Belongs to the alpha-class carbonic anhydrase family. Zn(2+) is required as a cofactor. N-glycosylated.

It localises to the plastid. The protein resides in the chloroplast stroma. It carries out the reaction hydrogencarbonate + H(+) = CO2 + H2O. Reversible hydration of carbon dioxide. The sequence is that of Alpha carbonic anhydrase 4 (ACA4) from Arabidopsis thaliana (Mouse-ear cress).